The sequence spans 355 residues: cGAMP-activated phospholipase (355 aa).

The PNPLA domain occupies 17–214; that stretch reads LSLNGGGARG…VANNPSFIGL (198 aa). Residues 21 to 26 carry the GXGXXG motif; the sequence is GGGARG. The GXSXG motif lies at 60 to 64; that stretch reads GTSIG. Catalysis depends on serine 62, which acts as the Nucleophile. The active-site Proton acceptor is aspartate 201. The DGA/G motif lies at 201–203; sequence DGG.

It belongs to the patatin family.

The catalysed reaction is a 1,2-diacyl-sn-glycero-3-phosphocholine + H2O = a 2-acyl-sn-glycero-3-phosphocholine + a fatty acid + H(+). The enzyme catalyses 1,2-di-(9Z-octadecenoyl)-sn-glycero-3-phosphoethanolamine + 2 H2O = sn-glycero-3-phosphoethanolamine + 2 (9Z)-octadecenoate + 2 H(+). Phospholipase activity is specifically activated upon 3',3'-cGAMP (cGAMP) binding. Is not activated by the other cyclic dinucleotides 3',3'-cUAMP, 3',3'-c-diAMP and 3',3'-c-diGMP. Therefore, is specifically activated by only the nucleotide synthesized from its adjacently encoded nucleotidyltransferase (DncV). The cGAMP-activation of lipase is inhibited by T4 phage protein Acb2 (Vs.4). In terms of biological role, effector phospholipase of a CBASS antiviral system. CBASS (cyclic oligonucleotide-based antiphage signaling system) provides immunity against bacteriophages. The CD-NTase protein (DncV) synthesizes cyclic nucleotides in response to infection; these serve as specific second messenger signals. The signals activate a diverse range of effectors, leading to bacterial cell death and thus abortive phage infection. A type II-A(GA) CBASS system. Functionally, phospholipase that is activated upon binding to the cyclic dinucleotide (CDN) second messenger 3',3'-cyclic GMP-AMP (3',3'-cGAMP). Then degrades phosphatidylethanolamine (PE) and phosphatidylglycerol (PG), the major phospholipids in the cell membrane of V.cholerae, releasing 16:1 and 18:1 free fatty acids. Upon expression in E.coli with cognate DncV, the cell inner membrane shrinks and separates from the cell wall. Its function is as follows. Protects E.coli against phage infection. When the CBASS operon (capV-dncV-cap2-cap3) is introduced in E.coli MG1655 there is about 100-fold protection against phages P1 and T2. When the operon is introduced in E.coli MG1655 there is a more than 10(3) decrease in the efficiency of T2 plaque formation. Protects 100-fold against phage T5, offers no protection against T7. When the operon is introduced in E.coli MG1655 it protects against phages T2, T4, T5 and T6. Another paper shows the operon confers protection against phages P1, T2, T5 and T6 but not T4 or lambda. This chain is cGAMP-activated phospholipase, found in Vibrio cholerae serotype O1 (strain ATCC 39315 / El Tor Inaba N16961).